Here is a 1380-residue protein sequence, read N- to C-terminus: Carboxypeptidase D (1380 aa).

The signal sequence occupies residues 1–31; it reads MASGRDERPPWRLGRLLLLMCLLLLGSSARA. The Extracellular portion of the chain corresponds to 32–1299; that stretch reads AHIKKAEATT…DNRIFGLPRE (1268 aa). Residues 57–380 form the Peptidase M14 1 domain; it reads RYYHEEELES…ESLITLIEKV (324 aa). Residues histidine 139 and glutamate 142 each contribute to the Zn(2+) site. The Cell attachment site signature appears at 162–164; the sequence is RGD. A glycan (N-linked (GlcNAc...) asparagine) is linked at asparagine 172. Residues 190-232 form a disordered region; the sequence is AREGDCGFGDGGPSGASGRDNSRGRDLNRSFPDQFSTGEPPAL. Residues 195–204 are compositionally biased toward gly residues; the sequence is CGFGDGGPSG. Asparagine 217 carries an N-linked (GlcNAc...) asparagine glycan. Zn(2+) is bound at residue histidine 257. Residue tyrosine 265 is modified to Phosphotyrosine. Serine 270 is subject to Phosphoserine. Glutamate 350 acts as the Proton donor/acceptor in catalysis. Residues asparagine 399, asparagine 410, asparagine 429, and asparagine 522 are each glycosylated (N-linked (GlcNAc...) asparagine). The region spanning 502–792 is the Peptidase M14 2 domain; that stretch reads HHHHFPDMEI…RSLIQFMKQV (291 aa). Zn(2+)-binding residues include histidine 564 and glutamate 567. Asparagine 626 carries N-linked (GlcNAc...) asparagine glycosylation. Zn(2+) is bound at residue histidine 671. Glutamate 762 acts as the Proton donor/acceptor in catalysis. N-linked (GlcNAc...) asparagine glycosylation is found at asparagine 811, asparagine 855, asparagine 867, and asparagine 879. The interval 874–899 is disordered; that stretch reads STDSNNESKKGKGASSSTNDASDPTT. Polar residues predominate over residues 887-897; it reads ASSSTNDASDP. A Peptidase M14 3 domain is found at 932–1211; it reads RYHSYKDLSE…RSLLSMLVEV (280 aa). N-linked (GlcNAc...) asparagine glycans are attached at residues asparagine 955, asparagine 978, asparagine 1070, and asparagine 1142. A helical membrane pass occupies residues 1300–1320; it reads LVVTVSGATMSALILTACIIW. S-palmitoyl cysteine attachment occurs at residues cysteine 1317, cysteine 1321, and cysteine 1323. Topologically, residues 1321–1380 are cytoplasmic; sequence CICSIKSNRHKDGFHRLRQHHDEYEDEIRMMSTGSKKSLLSHEFQDETDTEEETLYSSKH. Residues serine 1358 and serine 1361 each carry the phosphoserine modification. Residues 1359–1380 form a disordered region; sequence LLSHEFQDETDTEEETLYSSKH. Phosphothreonine is present on residues threonine 1368 and threonine 1370.

The protein belongs to the peptidase M14 family. The cofactor is Zn(2+). In terms of tissue distribution, highly expressed in placenta, pancreas and hepatoma cells. Lower levels found in skeletal muscle, heart and colon carcinoma and melanoma cell lines.

Its subcellular location is the cell membrane. It carries out the reaction Releases C-terminal Arg and Lys from polypeptides.. In Homo sapiens (Human), this protein is Carboxypeptidase D (CPD).